We begin with the raw amino-acid sequence, 359 residues long: MSFNISQENEFQTMYIKYFNKTYSIIEGSYNYYLFVFYIQIALIFIVLFYYLLNVYIDIKTCQFSTNTQKIHHAIYLPCVLGHVMCLIQKILLIKDSPAGDDMTNPVFYYISLFRAIFCFPGFYCLSAFVAERWFATYFLNDYEKNQRTWLVGLILWIIYSIAFISALDFHTAPSTVIHVTIFILLSCLAYLSNYLNFLLNRSYYYKSNRSDGGGYSLAQRFQISDNIRFSFFFNRLALSIAFFQISGPMCLLIDNLNISRSWKNLNTVVFDTILLLYAIVTPFVIYHHNPKYRTELQKIANSIRNIRVRTNKNQIMPMDSLDESFNSLRIQDTFGKTIVFNVTEQTSTYFEKLDRAWS.

Helical transmembrane passes span 33-53 (YLFV…YYLL), 74-94 (AIYL…ILLI), 111-131 (ISLF…AFVA), 150-170 (WLVG…ALDF), 180-200 (VTIF…NFLL), 237-257 (LALS…IDNL), and 266-286 (LNTV…PFVI).

Belongs to the nematode receptor-like protein sre family.

It localises to the membrane. The polypeptide is Serpentine receptor class epsilon-13 (sre-13) (Caenorhabditis elegans).